Here is a 1939-residue protein sequence, read N- to C-terminus: Myosin-4 (1939 aa).

The 50-residue stretch at 33–82 (DAKSSVFVVDAKESYVKATVQSREGGKVTAKTEGGATVTVKDDQVFSMNP) folds into the Myosin N-terminal SH3-like domain. Ser-36 carries the phosphoserine modification. Thr-64 and Thr-69 each carry phosphothreonine. A Phosphoserine modification is found at Ser-79. The 697-residue stretch at 86 to 782 (DKIEDMAMMT…LLGTLEEMRD (697 aa)) folds into the Myosin motor domain. Residue Lys-130 is modified to N6,N6,N6-trimethyllysine. Position 179–186 (179–186 (GESGAGKT)) interacts with ATP. Tyr-389 carries the phosphotyrosine modification. The residue at position 391 (Thr-391) is a Phosphothreonine. Ser-392 carries the phosphoserine modification. A Phosphothreonine modification is found at Thr-419. Tyr-424 carries the phosphotyrosine modification. Ser-625 bears the Phosphoserine mark. Residues 659-681 (LNKLMTNLKSTHPHFVRCLIPNE) are actin-binding. Position 757 is a pros-methylhistidine (His-757). The actin-binding stretch occupies residues 761–775 (KFGHTKVFFKAGLLG). The residue at position 776 (Thr-776) is a Phosphothreonine. In terms of domain architecture, IQ spans 785–814 (LAQLITRTQAVCRGYLMRVEFKKMMERRES). The stretch at 843-1939 (LLKSAETEKE…EVHTKVISEE (1097 aa)) forms a coiled coil. Phosphoserine occurs at positions 1092 and 1096. 2 disordered regions span residues 1128–1147 (AERA…SREL) and 1153–1172 (RLEE…KKRE). 2 positions are modified to phosphoserine: Ser-1162 and Ser-1237. The residue at position 1241 (Thr-1241) is a Phosphothreonine. Ser-1243 bears the Phosphoserine mark. Thr-1255 bears the Phosphothreonine mark. Ser-1261 carries the phosphoserine modification. Phosphothreonine is present on Thr-1265. Positions 1276-1299 (ELSTQKARLHTESGEFSRQLDEKD) are disordered. Ser-1278 carries the phosphoserine modification. Basic and acidic residues predominate over residues 1284-1299 (LHTESGEFSRQLDEKD). Phosphothreonine is present on Thr-1286. Ser-1288, Ser-1292, Ser-1303, Ser-1306, and Ser-1413 each carry phosphoserine. Residue Tyr-1464 is modified to Phosphotyrosine. A Phosphothreonine modification is found at Thr-1467. Ser-1474 bears the Phosphoserine mark. The residue at position 1492 (Tyr-1492) is a Phosphotyrosine. Ser-1495 is subject to Phosphoserine. At Thr-1501 the chain carries Phosphothreonine. The residue at position 1514 (Ser-1514) is a Phosphoserine. Residue Thr-1517 is modified to Phosphothreonine. 8 positions are modified to phosphoserine: Ser-1542, Ser-1547, Ser-1554, Ser-1574, Ser-1600, Ser-1603, Ser-1714, and Ser-1726. Thr-1730 and Thr-1736 each carry phosphothreonine. The residue at position 1739 (Ser-1739) is a Phosphoserine.

Belongs to the TRAFAC class myosin-kinesin ATPase superfamily. Myosin family. Muscle myosin is a hexameric protein that consists of 2 heavy chain subunits (MHC), 2 alkali light chain subunits (MLC) and 2 regulatory light chain subunits (MLC-2). As to expression, expressed in type 2b myofibers in the tibialis anterior muscle (at protein level).

It localises to the cytoplasm. The protein resides in the myofibril. Its function is as follows. Muscle contraction. The protein is Myosin-4 (Myh4) of Mus musculus (Mouse).